A 152-amino-acid chain; its full sequence is UPF0719 transmembrane protein MT2674.1 (152 aa).

The next 4 helical transmembrane spans lie at 21–41 (VATV…FLMV), 62–82 (VVLA…AIYA), 92–112 (IGVA…LVIL), and 131–151 (PAVF…AAAL).

This sequence belongs to the UPF0719 family.

It is found in the cell membrane. This Mycobacterium tuberculosis (strain CDC 1551 / Oshkosh) protein is UPF0719 transmembrane protein MT2674.1.